The primary structure comprises 355 residues: Chemerin-like receptor 2 (355 aa).

The Extracellular segment spans residues 1–41 (MEDLEETLFEEFENYSYDLDYYSLESDLEEKVQLGVVHWVS). The N-linked (GlcNAc...) asparagine glycan is linked to asparagine 14. A helical membrane pass occupies residues 42–62 (LVLYCLAFVLGIPGNAIVIWF). Residues 63–73 (TGFKWKKTVTT) lie on the Cytoplasmic side of the membrane. A helical membrane pass occupies residues 74–94 (LWFLNLAIADFIFLLFLPLYI). The Extracellular portion of the chain corresponds to 95–112 (SYVAMNFHWPFGIWLCKA). The cysteines at positions 110 and 187 are disulfide-linked. Residues 113 to 133 (NSFTAQLNMFASVFFLTVISL) form a helical membrane-spanning segment. Topologically, residues 134-154 (DHYIHLIHPVLSHRHRTLKNS) are cytoplasmic. Residues 155–175 (LIVIIFIWLLASLIGGPALYF) form a helical membrane-spanning segment. Over 176-210 (RDTVEFNNHTLCYNNFQKHDPDLTLIRHHVLTWVK) the chain is Extracellular. A helical membrane pass occupies residues 211–231 (FIIGYLFPLLTMSICYLCLIF). Residues 232–247 (KVKKRSILISSRHFWT) lie on the Cytoplasmic side of the membrane. A helical transmembrane segment spans residues 248–268 (ILVVVVAFVVCWTPYHLFSIW). The Extracellular segment spans residues 269–286 (ELTIHHNSYSHHVMQAGI). The helical transmembrane segment at 287–307 (PLSTGLAFLNSCLNPILYVLI) threads the bilayer. The Cytoplasmic portion of the chain corresponds to 308–355 (SKKFQARFRSSVAEILKYTLWEVSCSGTVSEQLRNSETKNLCLLETAQ).

This sequence belongs to the chemokine-like receptor (CMKLR) family. As to expression, expressed in hippocampus.

It localises to the cell membrane. In terms of biological role, receptor for chemoattractant adipokine chemerin/RARRES2 suggesting a role for this receptor in the regulation of inflammation and energy homesotasis. Signals mainly via beta-arrestin pathway. Binding of RARRES2 activates weakly G proteins, calcium mobilization and MAPK1/MAPK3 (ERK1/2) phosphorylation too. Also acts as a receptor for TAFA1, mediates its effects on neuronal stem-cell proliferation and differentiation via the activation of ROCK/ERK and ROCK/STAT3 signaling pathway. Functionally, (Microbial infection) Coreceptor for HIV-1. The chain is Chemerin-like receptor 2 from Homo sapiens (Human).